The sequence spans 370 residues: Uroporphyrinogen decarboxylase (370 aa).

Residues 29–33 (RQAGR), Asp-79, Tyr-155, Ser-210, and His-342 contribute to the substrate site.

Belongs to the uroporphyrinogen decarboxylase family. In terms of assembly, homodimer.

Its subcellular location is the cytoplasm. It catalyses the reaction uroporphyrinogen III + 4 H(+) = coproporphyrinogen III + 4 CO2. Its pathway is porphyrin-containing compound metabolism; protoporphyrin-IX biosynthesis; coproporphyrinogen-III from 5-aminolevulinate: step 4/4. Functionally, catalyzes the decarboxylation of four acetate groups of uroporphyrinogen-III to yield coproporphyrinogen-III. The sequence is that of Uroporphyrinogen decarboxylase from Variovorax paradoxus (strain S110).